Reading from the N-terminus, the 235-residue chain is Glycerol uptake facilitator protein 2 (235 aa).

Transmembrane regions (helical) follow at residues 4 to 24 (FLGE…SGAA), 39 to 59 (FICL…GQFG), 62 to 82 (GHLN…PMAN), 83 to 103 (VWPY…IVII), 134 to 154 (VFNF…LLNL), and 165 to 185 (MVGL…GFAI). Positions 65-67 (NPA) match the NPA 1 motif. Residues 186–188 (NPA) carry the NPA 2 motif. The chain crosses the membrane as a helical span at residues 210 to 230 (WGYAWVPMFGPLLGGILAAGL).

It belongs to the MIP/aquaporin (TC 1.A.8) family.

The protein localises to the cell membrane. In terms of biological role, transporter that facilitates the transmembrane diffusion of water, dihydroxyacetone, glycerol and H(2)O(2). Is not permeable to urea and D/L-lactic acid. The chain is Glycerol uptake facilitator protein 2 from Lactiplantibacillus plantarum (strain ATCC BAA-793 / NCIMB 8826 / WCFS1) (Lactobacillus plantarum).